The following is a 500-amino-acid chain: Aspartyl/glutamyl-tRNA(Asn/Gln) amidotransferase subunit B (500 aa).

Belongs to the GatB/GatE family. GatB subfamily. Heterotrimer of A, B and C subunits.

The enzyme catalyses L-glutamyl-tRNA(Gln) + L-glutamine + ATP + H2O = L-glutaminyl-tRNA(Gln) + L-glutamate + ADP + phosphate + H(+). The catalysed reaction is L-aspartyl-tRNA(Asn) + L-glutamine + ATP + H2O = L-asparaginyl-tRNA(Asn) + L-glutamate + ADP + phosphate + 2 H(+). In terms of biological role, allows the formation of correctly charged Asn-tRNA(Asn) or Gln-tRNA(Gln) through the transamidation of misacylated Asp-tRNA(Asn) or Glu-tRNA(Gln) in organisms which lack either or both of asparaginyl-tRNA or glutaminyl-tRNA synthetases. The reaction takes place in the presence of glutamine and ATP through an activated phospho-Asp-tRNA(Asn) or phospho-Glu-tRNA(Gln). The sequence is that of Aspartyl/glutamyl-tRNA(Asn/Gln) amidotransferase subunit B from Brucella ovis (strain ATCC 25840 / 63/290 / NCTC 10512).